The following is a 315-amino-acid chain: Solute carrier family 25 member 32 (315 aa).

3 Solcar repeats span residues 20–109 (HVRY…IKSY), 118–209 (LEAT…LKLK), and 222–306 (LSTV…VSHF). Helical transmembrane passes span 26 to 43 (LVAGVSGGVLSNLALHPL), 89 to 106 (VWGAGLSWGLYFFFYNAI), 123 to 143 (YLVSAAEAGAMTLCITNPLWV), 186 to 203 (FVPGLFGTSHGALQFMAY), 227 to 243 (YISVAALSKIFAVAATY), and 281 to 300 (GIAPNLIRVTPACCITFVVY).

It belongs to the mitochondrial carrier (TC 2.A.29) family.

Its subcellular location is the mitochondrion inner membrane. The enzyme catalyses FAD(in) = FAD(out). Facilitates flavin adenine dinucleotide (FAD) translocation across the mitochondrial inner membrane into the mitochondrial matrix where it acts as a redox cofactor to assist flavoenzyme activities in fundamental metabolic processes including fatty acid beta-oxidation, amino acid and choline metabolism as well as mitochondrial electron transportation. In particular, provides FAD to DLD dehydrogenase of the glycine cleavage system, part of mitochondrial one-carbon metabolic pathway involved in neural tube closure in early embryogenesis. This is Solute carrier family 25 member 32 from Macaca fascicularis (Crab-eating macaque).